Here is a 663-residue protein sequence, read N- to C-terminus: 4-hydroxy-3-methylbut-2-en-1-yl diphosphate synthase (flavodoxin) (663 aa).

Positions 568, 571, 602, and 609 each coordinate [4Fe-4S] cluster.

Belongs to the IspG family. Requires [4Fe-4S] cluster as cofactor.

The enzyme catalyses (2E)-4-hydroxy-3-methylbut-2-enyl diphosphate + oxidized [flavodoxin] + H2O + 2 H(+) = 2-C-methyl-D-erythritol 2,4-cyclic diphosphate + reduced [flavodoxin]. It functions in the pathway isoprenoid biosynthesis; isopentenyl diphosphate biosynthesis via DXP pathway; isopentenyl diphosphate from 1-deoxy-D-xylulose 5-phosphate: step 5/6. Its function is as follows. Converts 2C-methyl-D-erythritol 2,4-cyclodiphosphate (ME-2,4cPP) into 1-hydroxy-2-methyl-2-(E)-butenyl 4-diphosphate. The sequence is that of 4-hydroxy-3-methylbut-2-en-1-yl diphosphate synthase (flavodoxin) from Leptospira borgpetersenii serovar Hardjo-bovis (strain L550).